The primary structure comprises 1228 residues: Multimerin-1 (1228 aa).

The first 19 residues, 1–19 (MKGARLFVLLSSLWSGGIG), serve as a signal peptide directing secretion. A glycan (N-linked (GlcNAc...) asparagine) is linked at Asn-21. Residues 68-98 (TPEARTSEDSLLKSTLPPSETSAPAEGVRNQ) form a disordered region. Polar residues predominate over residues 79–89 (LKSTLPPSETS). Asn-97, Asn-114, and Asn-120 each carry an N-linked (GlcNAc...) asparagine glycan. The N-linked (GlcNAc...) (complex) asparagine glycan is linked to Asn-136. Residues 157–200 (NTVGGTGGIGGVGGTGGVGNRAPRETYLSRGDSSSSQRTDYQKS) are disordered. The segment covering 160-175 (GGTGGIGGVGGTGGVG) has biased composition (gly residues). Positions 186–188 (RGD) match the Cell attachment site motif. Polar residues predominate over residues 187–200 (GDSSSSQRTDYQKS). Residues 207–282 (GKNWCAYVHT…PGYSGPKCQL (76 aa)) enclose the EMI domain. 3 disulfide bridges follow: Cys-211/Cys-272, Cys-238/Cys-245, and Cys-271/Cys-280. The O-linked (Fuc) threonine glycan is linked to Thr-216. An O-linked (Fuc) threonine glycan is attached at Thr-265. 2 coiled-coil regions span residues 333-365 (MKLT…KVSE) and 400-430 (NDMQ…IQKV). N-linked (GlcNAc...) asparagine glycosylation is present at Asn-344. N-linked (GlcNAc...) asparagine glycosylation is found at Asn-431, Asn-507, Asn-541, Asn-576, Asn-618, Asn-680, Asn-729, Asn-783, Asn-816, Asn-828, Asn-840, Asn-921, Asn-933, Asn-942, Asn-981, and Asn-1020. Residues 503-523 (YESLNKTLSKLKEVHEQLLST) adopt a coiled-coil conformation. Coiled-coil stretches lie at residues 580–650 (SLEM…EILQ) and 675–726 (RKKI…EMED). Residues 819 to 869 (NFQKMYQMFNETTSQVRKYQQNMSHLEEKLLLTTKISKNFETRLQDIESKV) are a coiled coil. The 37-residue stretch at 1041–1077 (EYSSCSRHPCQNGGTCINGRTSFTCACRHPFTGDNCT) folds into the EGF-like domain. 3 cysteine pairs are disulfide-bonded: Cys-1045/Cys-1056, Cys-1050/Cys-1065, and Cys-1067/Cys-1076. A glycan (O-linked (Fuc) threonine) is linked at Thr-1055. A glycan (N-linked (GlcNAc...) asparagine) is linked at Asn-1075. Residues 1096 to 1228 (RYAPMVAFFA…TFSGYLLYRT (133 aa)) enclose the C1q domain.

In terms of assembly, multimeric. Composed of varying sized, disulfide-linked multimers, the smallest of which is a homotrimer. Proteolysis of the promultimerin in the N-terminal region, leads to the mature p155 form that is stored in platelets. Interacts with factor V/Va. Post-translationally, the N-terminus is blocked. Extensively N-glycosylated. In terms of processing, O-fucosylated within the EMI domain (at Thr-216 and Thr-265) by FUT10/POFUT3 and FUT11/POFUT4. O-fucosylation at Thr-216 and Thr-1055 are required for facilitating protein folding and secretion. Synthesized by endothelial cells and megakaryocytes. Stored in platelet alpha granules and endothelial cell Weibel-Palade bodies, following activation of these cells, it is released and attached to megakaryocytes, platelets, endothelium and subendothelium of blood vessels. Not found in plasma. Found in vascular tissues such as placenta, lung, and liver.

Its subcellular location is the secreted. Its function is as follows. Carrier protein for platelet (but not plasma) factor V/Va. Plays a role in the storage and stabilization of factor V in platelets. Upon release following platelet activation, may limit platelet and plasma factor Va-dependent thrombin generation. Ligand for integrin alpha-IIb/beta-3 and integrin alpha-V/beta-3 on activated platelets, and may function as an extracellular matrix or adhesive protein. This is Multimerin-1 (MMRN1) from Homo sapiens (Human).